Consider the following 45-residue polypeptide: Large ribosomal subunit protein bL34c (45 aa).

Over residues 1–10 (MSKGFSNGTN) the composition is skewed to polar residues. The disordered stretch occupies residues 1 to 45 (MSKGFSNGTNIKRVRKSGFRARMSNSSGRKILNSRRRKQRKKIAL). Basic residues predominate over residues 32-45 (LNSRRRKQRKKIAL).

Belongs to the bacterial ribosomal protein bL34 family.

Its subcellular location is the plastid. It is found in the chloroplast. The polypeptide is Large ribosomal subunit protein bL34c (Gracilaria tenuistipitata var. liui (Red alga)).